A 460-amino-acid chain; its full sequence is Lipase member H-A (460 aa).

An N-terminal signal peptide occupies residues 1-26 (MLLSFYFNGLLLVGCLLSWGRSDTEG). Residues N67 and N75 are each glycosylated (N-linked (GlcNAc...) asparagine). The active-site Nucleophile is the S163. N177 carries an N-linked (GlcNAc...) asparagine glycan. The Charge relay system role is filled by D187. Residues C242 and C255 are joined by a disulfide bond. The active-site Charge relay system is the H257. Cystine bridges form between C279–C290 and C293–C301. N289 carries an N-linked (GlcNAc...) asparagine glycan. A glycan (N-linked (GlcNAc...) asparagine) is linked at N366. A disulfide bridge links C436 with C455.

The protein belongs to the AB hydrolase superfamily. Lipase family.

Its subcellular location is the secreted. It is found in the cell membrane. It carries out the reaction 1-hexadecanoyl-2-(9Z-octadecenoyl)-sn-glycero-3-phosphate + H2O = 2-(9Z-octadecenoyl)-sn-glycero-3-phosphate + hexadecanoate + H(+). Hydrolyzes specifically phosphatidic acid (PA) to produce 2-acyl lysophosphatidic acid (LPA; a potent bioactive lipid mediator) and fatty acid. Does not hydrolyze other phospholipids, like phosphatidylserine (PS), phosphatidylcholine (PC) and phosphatidylethanolamine (PE) or triacylglycerol (TG). The chain is Lipase member H-A (liph-a) from Xenopus laevis (African clawed frog).